Here is a 335-residue protein sequence, read N- to C-terminus: Anthranilate phosphoribosyltransferase (335 aa).

5-phospho-alpha-D-ribose 1-diphosphate-binding positions include G79, 82-83, S87, 89-92, 107-115, and S119; these read GD, NIST, and KHGNRSITS. G79 is a binding site for anthranilate. S91 is a Mg(2+) binding site. Position 110 (N110) interacts with anthranilate. R165 contacts anthranilate. The Mg(2+) site is built by D224 and E225.

This sequence belongs to the anthranilate phosphoribosyltransferase family. As to quaternary structure, homodimer. It depends on Mg(2+) as a cofactor.

The enzyme catalyses N-(5-phospho-beta-D-ribosyl)anthranilate + diphosphate = 5-phospho-alpha-D-ribose 1-diphosphate + anthranilate. Its pathway is amino-acid biosynthesis; L-tryptophan biosynthesis; L-tryptophan from chorismate: step 2/5. Catalyzes the transfer of the phosphoribosyl group of 5-phosphorylribose-1-pyrophosphate (PRPP) to anthranilate to yield N-(5'-phosphoribosyl)-anthranilate (PRA). This chain is Anthranilate phosphoribosyltransferase, found in Lactococcus lactis subsp. lactis (strain IL1403) (Streptococcus lactis).